The sequence spans 204 residues: Acyl-homoserine-lactone synthase (204 aa).

Belongs to the autoinducer synthase family.

The enzyme catalyses a fatty acyl-[ACP] + S-adenosyl-L-methionine = an N-acyl-L-homoserine lactone + S-methyl-5'-thioadenosine + holo-[ACP] + H(+). In terms of biological role, required for the synthesis of acyl-HSL autoinducers that bind to SolR. This is Acyl-homoserine-lactone synthase (solI) from Ralstonia nicotianae (strain ATCC BAA-1114 / GMI1000) (Ralstonia solanacearum).